The chain runs to 136 residues: ATP synthase F(0) complex subunit C1, mitochondrial (136 aa).

Residues 1-61 (MQTTGALLIS…REFQTSVVSR (61 aa)) constitute a mitochondrion transit peptide. Residues 77 to 97 (VGVAGSGAGIGTVFGSLIIGY) form a helical membrane-spanning segment. At Lys104 the chain carries N6,N6,N6-trimethyllysine. Residues 112-132 (ILGFALSEAMGLFCLMVAFLI) form a helical membrane-spanning segment.

It belongs to the ATPase C chain family. Homooctamer; the c-ring consists of eight c subunits forming a circle, and each subunit adopts a hairpin shape. Component of the ATP synthase complex composed at least of ATP5F1A/subunit alpha, ATP5F1B/subunit beta, ATP5MC1/subunit c (homooctomer), MT-ATP6/subunit a, MT-ATP8/subunit 8, ATP5ME/subunit e, ATP5MF/subunit f, ATP5MG/subunit g, ATP5MK/subunit k, ATP5MJ/subunit j, ATP5F1C/subunit gamma, ATP5F1D/subunit delta, ATP5F1E/subunit epsilon, ATP5PF/subunit F6, ATP5PB/subunit b, ATP5PD/subunit d, ATP5PO/subunit OSCP. ATP synthase complex consists of a soluble F(1) head domain (subunits alpha(3) and beta(3)) - the catalytic core - and a membrane F(0) domain - the membrane proton channel (subunits c, a, 8, e, f, g, k and j). These two domains are linked by a central stalk (subunits gamma, delta, and epsilon) rotating inside the F1 region and a stationary peripheral stalk (subunits F6, b, d, and OSCP). Interacts with TMEM70 (homooligomer form); this interaction facilitates the oligomer formation of subunit c/ATP5MC1 (c-ring) and the c-ring membrane insertion and also protects ATP5MC1 against intramitochondrial proteolysis. Trimethylated by ATPSCKMT at Lys-104. Methylation is required for proper incorporation of the C subunit into the ATP synthase complex and mitochondrial respiration.

It is found in the mitochondrion membrane. The enzyme catalyses H(+)(in) = H(+)(out). Functionally, subunit c, of the mitochondrial membrane ATP synthase complex (F(1)F(0) ATP synthase or Complex V) that produces ATP from ADP in the presence of a proton gradient across the membrane which is generated by electron transport complexes of the respiratory chain. ATP synthase complex consist of a soluble F(1) head domain - the catalytic core - and a membrane F(1) domain - the membrane proton channel. These two domains are linked by a central stalk rotating inside the F(1) region and a stationary peripheral stalk. During catalysis, ATP synthesis in the catalytic domain of F(1) is coupled via a rotary mechanism of the central stalk subunits to proton translocation. With the subunit a (MT-ATP6), forms the proton-conducting channel in the F(0) domain, that contains two crucial half-channels (inlet and outlet) that facilitate proton movement from the mitochondrial intermembrane space (IMS) into the matrix. Protons are taken up via the inlet half-channel and released through the outlet half-channel, following a Grotthuss mechanism. The protein is ATP synthase F(0) complex subunit C1, mitochondrial of Bos taurus (Bovine).